Consider the following 358-residue polypeptide: Probable D-xylulose reductase A (358 aa).

Zn(2+)-binding residues include Cys-47, His-72, and Glu-73. Gly-182–Gly-187 is an NAD(+) binding site.

This sequence belongs to the zinc-containing alcohol dehydrogenase family. Zn(2+) is required as a cofactor.

It carries out the reaction xylitol + NAD(+) = D-xylulose + NADH + H(+). It participates in carbohydrate degradation; L-arabinose degradation via L-arabinitol; D-xylulose 5-phosphate from L-arabinose (fungal route): step 4/5. Its function is as follows. Xylitol dehydrogenase which catalyzes the conversion of xylitol to D-xylulose. Xylose is a major component of hemicelluloses such as xylan. Most fungi utilize D-xylose via three enzymatic reactions, xylose reductase (XR), xylitol dehydrogenase (XDH), and xylulokinase, to form xylulose 5-phosphate, which enters pentose phosphate pathway. The polypeptide is Probable D-xylulose reductase A (xdhA) (Aspergillus clavatus (strain ATCC 1007 / CBS 513.65 / DSM 816 / NCTC 3887 / NRRL 1 / QM 1276 / 107)).